The primary structure comprises 233 residues: MSKRLQVFPWITILFYTSKSQYWNYMTIPCTPTVGYGSHNISLHPLNNSLFQDDVFEWYIDKPMVTNKLCLYQSNERIKSNLDSPNIMWQCTDNRTLILMNLTTTYSRNYYFQSFKYLGQGVPKPNNLCYNVSVHFTHQTHCHTTTSSLYPPTSVHDSLEISQSFTSTNFTHTAVHYAAGNVEAQHDTATSHTMWIIPLVIVITIIVLICFKFPQKAWNKFTQYRYSGMLAAA.

An N-terminal signal peptide occupies residues 1 to 20 (MSKRLQVFPWITILFYTSKS). Residues Asn-40, Asn-94, Asn-101, Asn-131, and Asn-169 are each glycosylated (N-linked (GlcNAc...) asparagine; by host). The helical transmembrane segment at 194-214 (MWIIPLVIVITIIVLICFKFP) threads the bilayer.

This sequence belongs to the HHV-5 UL9 family.

Its subcellular location is the host membrane. The sequence is that of Membrane glycoprotein UL9 (UL9) from Homo sapiens (Human).